The chain runs to 116 residues: Protein MGF 110-2L (116 aa).

An N-terminal signal peptide occupies residues 1 to 19; the sequence is MRFFSYLGLLLAGLASLAS.

The protein belongs to the asfivirus MGF 110 family.

Plays a role in virus cell tropism, and may be required for efficient virus replication in macrophages. The protein is Protein MGF 110-2L of Ornithodoros (relapsing fever ticks).